The sequence spans 179 residues: Macro domain-containing protein XCC3184 (179 aa).

A Macro domain is found at M1 to E175.

The protein belongs to the MacroD-type family.

In Xanthomonas campestris pv. campestris (strain ATCC 33913 / DSM 3586 / NCPPB 528 / LMG 568 / P 25), this protein is Macro domain-containing protein XCC3184.